Consider the following 150-residue polypeptide: Putative solute carrier family 19 member 4 (150 aa).

The disordered stretch occupies residues 118–137 (PSVREGACNEKSTENKKPQD). Positions 124 to 136 (ACNEKSTENKKPQ) are enriched in basic and acidic residues.

It belongs to the reduced folate carrier (RFC) transporter (TC 2.A.48) family.

In Homo sapiens (Human), this protein is Putative solute carrier family 19 member 4.